The chain runs to 298 residues: Protoheme IX farnesyltransferase (298 aa).

9 helical membrane-spanning segments follow: residues 16–36 (VVAL…PDMP), 45–65 (ALGF…NQLL), 93–113 (VFAG…VNVI), 114–134 (TAVL…VYLK), 141–161 (IVIG…AVTG), 172–192 (SLLV…LAIF), 223–243 (VLLA…VFYL), 244–264 (GGAV…LNPP), and 277–297 (IVYL…LPWV).

It belongs to the UbiA prenyltransferase family. Protoheme IX farnesyltransferase subfamily.

The protein resides in the cell inner membrane. It catalyses the reaction heme b + (2E,6E)-farnesyl diphosphate + H2O = Fe(II)-heme o + diphosphate. It functions in the pathway porphyrin-containing compound metabolism; heme O biosynthesis; heme O from protoheme: step 1/1. Converts heme B (protoheme IX) to heme O by substitution of the vinyl group on carbon 2 of heme B porphyrin ring with a hydroxyethyl farnesyl side group. This chain is Protoheme IX farnesyltransferase, found in Xanthomonas oryzae pv. oryzae (strain MAFF 311018).